Here is a 149-residue protein sequence, read N- to C-terminus: MKLILTQEVAGLGGPGDVVEVRDGYGRNYLLPKRLAMPASPGAVKQVALIKRAREVREIRDLDQARALRDQLEALPVTLPARAGSGGRLFGSVTPDDIAAAVHAAGGPKLDKRRIEISGPIKTIGSHQVTVRLHPEVSATVSVEVVPAS.

It belongs to the bacterial ribosomal protein bL9 family.

Its function is as follows. Binds to the 23S rRNA. The protein is Large ribosomal subunit protein bL9 of Acidothermus cellulolyticus (strain ATCC 43068 / DSM 8971 / 11B).